The primary structure comprises 295 residues: Ribosomal protein L11 methyltransferase (295 aa).

Positions 150, 171, 193, and 232 each coordinate S-adenosyl-L-methionine.

Belongs to the methyltransferase superfamily. PrmA family.

It localises to the cytoplasm. The enzyme catalyses L-lysyl-[protein] + 3 S-adenosyl-L-methionine = N(6),N(6),N(6)-trimethyl-L-lysyl-[protein] + 3 S-adenosyl-L-homocysteine + 3 H(+). Functionally, methylates ribosomal protein L11. In Neisseria gonorrhoeae (strain ATCC 700825 / FA 1090), this protein is Ribosomal protein L11 methyltransferase.